A 145-amino-acid chain; its full sequence is MIALIQRVSEASVTVDGQVTGTIGKGLLVLLGVEKEDDESKTKRLRDKVLGYRIFEDDAGKMNLNVQQAGGSVLVVSQFTLAADTKSGMRPSFSVGAAPADAERLYDYFVECCKDKDIQTETGIFAADMKVALLNDGPVTFWLQV.

The Gly-cisPro motif, important for rejection of L-amino acids motif lies at 137-138 (GP).

This sequence belongs to the DTD family. Homodimer.

The protein resides in the cytoplasm. The enzyme catalyses glycyl-tRNA(Ala) + H2O = tRNA(Ala) + glycine + H(+). It catalyses the reaction a D-aminoacyl-tRNA + H2O = a tRNA + a D-alpha-amino acid + H(+). In terms of biological role, an aminoacyl-tRNA editing enzyme that deacylates mischarged D-aminoacyl-tRNAs. Also deacylates mischarged glycyl-tRNA(Ala), protecting cells against glycine mischarging by AlaRS. Acts via tRNA-based rather than protein-based catalysis; rejects L-amino acids rather than detecting D-amino acids in the active site. By recycling D-aminoacyl-tRNA to D-amino acids and free tRNA molecules, this enzyme counteracts the toxicity associated with the formation of D-aminoacyl-tRNA entities in vivo and helps enforce protein L-homochirality. This Photobacterium profundum (strain SS9) protein is D-aminoacyl-tRNA deacylase.